The chain runs to 696 residues: Polyribonucleotide nucleotidyltransferase (696 aa).

D483 and D489 together coordinate Mg(2+). The 60-residue stretch at 550–609 (PRITTIYVKTDKIRDVIGSGGKNIRGITEATGVTIDIDDTGKINIASTDKAACDMAIKMI) folds into the KH domain. In terms of domain architecture, S1 motif spans 619–687 (GKLYMGLVKK…KQGKIKLSRK (69 aa)).

It belongs to the polyribonucleotide nucleotidyltransferase family. Mg(2+) is required as a cofactor.

The protein resides in the cytoplasm. The catalysed reaction is RNA(n+1) + phosphate = RNA(n) + a ribonucleoside 5'-diphosphate. Involved in mRNA degradation. Catalyzes the phosphorolysis of single-stranded polyribonucleotides processively in the 3'- to 5'-direction. This is Polyribonucleotide nucleotidyltransferase from Geotalea daltonii (strain DSM 22248 / JCM 15807 / FRC-32) (Geobacter daltonii).